The following is a 668-amino-acid chain: DNA ligase (668 aa).

NAD(+) contacts are provided by residues 32 to 36 (DVEYD), 81 to 82 (SL), and Glu111. Lys113 (N6-AMP-lysine intermediate) is an active-site residue. The NAD(+) site is built by Arg134, Glu171, Lys290, and Lys314. Residues Cys408, Cys411, Cys426, and Cys432 each coordinate Zn(2+). One can recognise a BRCT domain in the interval 591–668 (EEDLSLKGQT…DEEALIAILS (78 aa)).

Belongs to the NAD-dependent DNA ligase family. LigA subfamily. It depends on Mg(2+) as a cofactor. The cofactor is Mn(2+).

It carries out the reaction NAD(+) + (deoxyribonucleotide)n-3'-hydroxyl + 5'-phospho-(deoxyribonucleotide)m = (deoxyribonucleotide)n+m + AMP + beta-nicotinamide D-nucleotide.. DNA ligase that catalyzes the formation of phosphodiester linkages between 5'-phosphoryl and 3'-hydroxyl groups in double-stranded DNA using NAD as a coenzyme and as the energy source for the reaction. It is essential for DNA replication and repair of damaged DNA. The polypeptide is DNA ligase (Shewanella piezotolerans (strain WP3 / JCM 13877)).